A 515-amino-acid chain; its full sequence is UBP3-associated protein BRE5 (515 aa).

The region spanning 8-140 (ICFAFLQNYY…FDITNDIIRF (133 aa)) is the NTF2 domain. Positions 157–166 (QSNEENSVSA) are enriched in low complexity. Disordered stretches follow at residues 157–410 (QSNE…PVFS) and 485–515 (KTVK…KRKD). The span at 168-201 (EEDKIRHESGVEKEKEKEKSPEISKPKAKKETVK) shows a compositional bias: basic and acidic residues. S187 carries the post-translational modification Phosphoserine. The segment covering 202–213 (DTTAPTESSTQE) has biased composition (polar residues). Basic and acidic residues-rich tracts occupy residues 262 to 282 (LNEK…KEGS) and 299 to 319 (EVSD…EIKP). Phosphoserine is present on S282. Polar residues predominate over residues 330 to 341 (SGNNASTPSSSP). The residue at position 336 (T336) is a Phosphothreonine. A Phosphoserine modification is found at S340. Over residues 374–396 (IRPETLPKKPTERKFEMGNRRDN) the composition is skewed to basic and acidic residues. At S398 the chain carries Phosphoserine. The 77-residue stretch at 418 to 494 (YPIYIRGTNG…KTVKKPTSNN (77 aa)) folds into the RRM domain. The span at 489 to 503 (KPTSNNPPGIFTNGT) shows a compositional bias: polar residues. Over residues 504–515 (RSHRKQPLKRKD) the composition is skewed to basic residues.

In terms of assembly, heterotetramer with UBP3; contains two molecules of BRE5 and two molecules of UBP3. Forms a complex composed of CDC48, DOA1, deubiquitinase UBP3 and probably BRE5. Within the complex, interacts (via C-terminus) with CDC48; the interaction is direct and UBP3-independent.

Its function is as follows. Has a role in de-ubiquitination. In conjunction with UBP3, cleaves ubiquitin, leading to the subsequent mono-ubiquitination of sec23. The protein is UBP3-associated protein BRE5 (BRE5) of Saccharomyces cerevisiae (strain ATCC 204508 / S288c) (Baker's yeast).